The following is a 418-amino-acid chain: CinA-like protein (418 aa).

The protein belongs to the CinA family.

This Leptospira interrogans serogroup Icterohaemorrhagiae serovar Lai (strain 56601) protein is CinA-like protein.